Here is a 300-residue protein sequence, read N- to C-terminus: 4-hydroxy-tetrahydrodipicolinate synthase (300 aa).

Threonine 45 provides a ligand contact to pyruvate. Residue tyrosine 140 is the Proton donor/acceptor of the active site. Lysine 169 acts as the Schiff-base intermediate with substrate in catalysis. Isoleucine 210 contacts pyruvate.

The protein belongs to the DapA family. Homotetramer; dimer of dimers.

The protein resides in the cytoplasm. The catalysed reaction is L-aspartate 4-semialdehyde + pyruvate = (2S,4S)-4-hydroxy-2,3,4,5-tetrahydrodipicolinate + H2O + H(+). Its pathway is amino-acid biosynthesis; L-lysine biosynthesis via DAP pathway; (S)-tetrahydrodipicolinate from L-aspartate: step 3/4. Functionally, catalyzes the condensation of (S)-aspartate-beta-semialdehyde [(S)-ASA] and pyruvate to 4-hydroxy-tetrahydrodipicolinate (HTPA). The protein is 4-hydroxy-tetrahydrodipicolinate synthase of Helicobacter pylori (strain HPAG1).